Consider the following 479-residue polypeptide: MIQVLLVTICLAVFPYQGSSIILESGNVNDYEVVYPRKVTALPNRAVQPKYEDAMQYEFKVNGEPVVLHLEKNKGLFSKDYSETYYSPDGRKITTKPPVEDHCYYHGRIQNDADSTASISACNGLKGHFKLQGETHLIEPLKLSGSEAHAVFKYENVEKEDEAPKMCGVTETNWESYEPIKKASKLVVTAEPLRYVELVIVADHGMVTKYNGDLDKIREWVHEMVNTVDEIYDYMYIDVILADLEIWTNEDLINVQPSAHHTLDSFGEWRERDLLKRKSHDNAQLLTATDFDGPTIGLAHVASMCDPKRSTGVVQDHSTINLRVAVTLAHEMGHNLGIHHDKGSCSCGGYACIMSPVISHDPSKYFSNCSYIQCWDFIRKHNPQCILNKPLRTDTVSTPVSGNELLEAGEDCDCGSPSNPCCDVGTCKLSPGAQCADGLCCDQCRFKKKGTICRIARGDWNDDRCTGQSADCPRNGLYG.

The first 20 residues, 1-20 (MIQVLLVTICLAVFPYQGSS), serve as a signal peptide directing secretion. A propeptide spanning residues 21-188 (IILESGNVND…PIKKASKLVV (168 aa)) is cleaved from the precursor. The region spanning 194–390 (RYVELVIVAD…HNPQCILNKP (197 aa)) is the Peptidase M12B domain. Disulfide bonds link Cys305-Cys385, Cys345-Cys369, and Cys347-Cys352. Residue His330 participates in Zn(2+) binding. Residue Glu331 is part of the active site. Zn(2+) is bound by residues His334 and His339. Asn368 carries an N-linked (GlcNAc...) asparagine glycan. Positions 391–408 (LRTDTVSTPVSGNELLEA) are excised as a propeptide. The region spanning 398–479 (TPVSGNELLE…ADCPRNGLYG (82 aa)) is the Disintegrin domain. 6 disulfides stabilise this stretch: Cys412–Cys427, Cys414–Cys422, Cys421–Cys444, Cys435–Cys441, Cys440–Cys465, and Cys453–Cys472. The short motif at 457–459 (RGD) is the Cell attachment site element.

It belongs to the venom metalloproteinase (M12B) family. P-II subfamily. P-IIa sub-subfamily. As to quaternary structure, monomer. Zn(2+) serves as cofactor. As to expression, expressed by the venom gland.

It localises to the secreted. Its function is as follows. Impairs hemostasis in the envenomed animal. Functionally, inhibits platelet aggregation. This Protobothrops mucrosquamatus (Taiwan habu) protein is Zinc metalloproteinase/disintegrin PMMP-1.